Reading from the N-terminus, the 262-residue chain is Cytochrome c oxidase subunit 3 (262 aa).

Transmembrane regions (helical) follow at residues Y39–W59, G83–F103, M120–A140, G163–I183, A201–L221, and A240–W260.

The protein belongs to the cytochrome c oxidase subunit 3 family. In terms of assembly, component of the cytochrome c oxidase (complex IV, CIV), a multisubunit enzyme composed of a catalytic core of 3 subunits and several supernumerary subunits. The complex exists as a monomer or a dimer and forms supercomplexes (SCs) in the inner mitochondrial membrane with ubiquinol-cytochrome c oxidoreductase (cytochrome b-c1 complex, complex III, CIII).

The protein resides in the mitochondrion inner membrane. The catalysed reaction is 4 Fe(II)-[cytochrome c] + O2 + 8 H(+)(in) = 4 Fe(III)-[cytochrome c] + 2 H2O + 4 H(+)(out). Component of the cytochrome c oxidase, the last enzyme in the mitochondrial electron transport chain which drives oxidative phosphorylation. The respiratory chain contains 3 multisubunit complexes succinate dehydrogenase (complex II, CII), ubiquinol-cytochrome c oxidoreductase (cytochrome b-c1 complex, complex III, CIII) and cytochrome c oxidase (complex IV, CIV), that cooperate to transfer electrons derived from NADH and succinate to molecular oxygen, creating an electrochemical gradient over the inner membrane that drives transmembrane transport and the ATP synthase. Cytochrome c oxidase is the component of the respiratory chain that catalyzes the reduction of oxygen to water. Electrons originating from reduced cytochrome c in the intermembrane space (IMS) are transferred via the dinuclear copper A center (CU(A)) of subunit 2 and heme A of subunit 1 to the active site in subunit 1, a binuclear center (BNC) formed by heme A3 and copper B (CU(B)). The BNC reduces molecular oxygen to 2 water molecules using 4 electrons from cytochrome c in the IMS and 4 protons from the mitochondrial matrix. This is Cytochrome c oxidase subunit 3 (mt:CoIII) from Drosophila yakuba (Fruit fly).